A 557-amino-acid chain; its full sequence is MYALALFASLLATALTSPVQDPKTCSGGSAVLCRDVKTAVDCGAVKHCQQMVWSKPTAKSLPCDICKTVVTEAGNLLKDNATQEEILHYLEKTCEWIHDSSLSASCKEVVDSYLPVILDMIKGEMSNPGEVCSALNLCQSLQEYLAEQNQKQLESNKIPEVDMARVVAPFMSNIPLLLYPQDHPRSQPQPKANEDVCQDCMKLVSDVQTAVKTNSSFIQGFVDHVKEDCDRLGPGVSDICKNYVDQYSEVCVQMLMHMQDQQPKEICVLAGFCNEVKRVPMKTLVPATETIKNILPALEMMDPYEQNLVQAHNVILCQTCQFVMNKFSELIVNNATEELLVKGLSNACALLPDPARTKCQEVVGTFGPSLLDIFIHEVNPSSLCGVIGLCAARPELVEALEQPAPAIVSALLKEPTPPKQPAQPKQSALPAHVPPQKNGGFCEVCKKLVLYLEHNLEKNSTKEEILAALEKGCSFLPDPYQKQCDDFVAEYEPLLLEILVEVMDPGFVCSKIGVCPSAYKLLLGTEKCVWGPSYWCQNMETAARCNAVDHCKRHVWN.

The signal sequence occupies residues 1-16 (MYALALFASLLATALT). Positions 17–59 (SPVQDPKTCSGGSAVLCRDVKTAVDCGAVKHCQQMVWSKPTAK) are excised as a propeptide. A Saposin A-type 1 domain is found at 18 to 58 (PVQDPKTCSGGSAVLCRDVKTAVDCGAVKHCQQMVWSKPTA). 4 Saposin B-type domains span residues 59–142 (KSLP…QSLQ), 193–277 (NEDV…NEVK), 313–394 (NVIL…AARP), and 438–519 (NGGF…PSAY). 3 disulfide bridges follow: C63-C138, C66-C132, and C94-C106. Residue N80 is glycosylated (N-linked (GlcNAc...) asparagine). A propeptide spanning residues 143–193 (EYLAEQNQKQLESNKIPEVDMARVVAPFMSNIPLLLYPQDHPRSQPQPKAN) is cleaved from the precursor. 3 disulfide bridges follow: C197–C273, C200–C267, and C229–C240. Residue N214 is glycosylated (N-linked (GlcNAc...) asparagine). Positions 277–312 (KRVPMKTLVPATETIKNILPALEMMDPYEQNLVQAH) are excised as a propeptide. 3 disulfides stabilise this stretch: C317–C390, C320–C384, and C348–C359. N334 carries N-linked (GlcNAc...) asparagine glycosylation. A propeptide spanning residues 393–437 (RPELVEALEQPAPAIVSALLKEPTPPKQPAQPKQSALPAHVPPQK) is cleaved from the precursor. Intrachain disulfides connect C442–C515, C445–C509, and C473–C484. N-linked (GlcNAc...) asparagine glycosylation is present at N459. Residues 520–557 (KLLLGTEKCVWGPSYWCQNMETAARCNAVDHCKRHVWN) constitute a propeptide that is removed on maturation. The Saposin A-type 2 domain occupies 521–557 (LLLGTEKCVWGPSYWCQNMETAARCNAVDHCKRHVWN).

In terms of assembly, saposin-B is a homodimer. Prosaposin exists as a roughly half-half mixture of monomers and disulfide-linked dimers. Monomeric prosaposin interacts (via C-terminus) with sortilin/SORT1, the interaction is required for targeting to lysosomes. Interacts with GRN; facilitates lysosomal delivery of progranulin from the extracellular space and the biosynthetic pathway.

Its subcellular location is the secreted. The protein localises to the lysosome. In terms of biological role, behaves as a myelinotrophic and neurotrophic factor, these effects are mediated by its G-protein-coupled receptors, GPR37 and GPR37L1, undergoing ligand-mediated internalization followed by ERK phosphorylation signaling. Functionally, saposin-A and saposin-C stimulate the hydrolysis of glucosylceramide by beta-glucosylceramidase (EC 3.2.1.45) and galactosylceramide by beta-galactosylceramidase (EC 3.2.1.46). Saposin-C apparently acts by combining with the enzyme and acidic lipid to form an activated complex, rather than by solubilizing the substrate. Its function is as follows. Saposin-B stimulates the hydrolysis of galacto-cerebroside sulfate by arylsulfatase A (EC 3.1.6.8), GM1 gangliosides by beta-galactosidase (EC 3.2.1.23) and globotriaosylceramide by alpha-galactosidase A (EC 3.2.1.22). Saposin-B forms a solubilizing complex with the substrates of the sphingolipid hydrolases. Saposin-D is a specific sphingomyelin phosphodiesterase activator (EC 3.1.4.12). In terms of biological role, saposins are specific low-molecular mass non-enzymatic proteins, they participate in the lysosomal degradation of sphingolipids, which takes place by the sequential action of specific hydrolases. This is Prosaposin (Psap) from Mus musculus (Mouse).